A 724-amino-acid polypeptide reads, in one-letter code: MTELAPSLVELARRFGIATEYTDWTGRQVLVSEATLVAALAALGVPAQTEQQRNDALAAQLRSYWARPLPATIVMRAGEQTQFRVHVTDGAPADVWLQLEDGTTRAEVVQVDNFTPPFDLDGRWIGEASFVLPADLPLGYHRVNLRSGDSQASAAVVVTPDWLGLPDKLAGRRAWGLAVQLYSVRSRQSWGIGDLTDLANLALWSASAHGAGYVLVNPLHAATLPGPAGRSKPIEPSPYLPTSRRFVNPLYLRVEAIPELVDLPKRGRVQRLRTNVQQHADQLDTIDRDSAWAAKRAALKLVHRVPRSAGRELAYAAFRTREGRALDDFATWCALAETYGDDWHRWPKSLRHPDASGVADFVDKHADAVDFHRWLQWQLDEQLASAQSQALRAGMSLGIMADLAVGVHPNGADAWALQDVLAQGVTAGAPPDEFNQLGQDWSQPPWRPDRLAEQEYRPFRALIQAALRHAGAVRIDHIIGLFRLWWIPDGAPPTQGTYVRYDHDAMIGIVALEAHRAGAVVVGEDLGTVEPWVRDYLLLRGLLGTSILWFEQDRDCGPAGTPLPAERWREYCLSSVTTHDLPPTAGYLAGDQVRLRESLGLLTNPVEAELESARADRAAWMAELRRVGLLADGAEPDSEEAVLALYRYLGRTPSRLLAVALTDAVGDRRTQNQPGTTDEYPNWRVPLTGPDGQPMLLEDIFTDRRAATLAEAVRAATTSPMSCW.

It belongs to the disproportionating enzyme family.

It is found in the cytoplasm. It carries out the reaction Transfers a segment of a (1-&gt;4)-alpha-D-glucan to a new position in an acceptor, which may be glucose or a (1-&gt;4)-alpha-D-glucan.. This is 4-alpha-glucanotransferase (malQ) from Mycobacterium bovis (strain ATCC BAA-935 / AF2122/97).